The primary structure comprises 465 residues: Hepatocyte nuclear factor 6 (465 aa).

Disordered regions lie at residues 15 to 84 (GVSH…GPLH) and 119 to 141 (SDKF…HQRL). Residues 123–140 (PHHHHHHHHHHHPHHHQR) show a composition bias toward basic residues. Residues 283–369 (GSNSGQMEEI…QRMSALRLAA (87 aa)) constitute a DNA-binding region (CUT). A DNA-binding region (homeobox) is located at residues 385 to 444 (PKKPRLVFTDVQRRTLHAIFKENKRPSKELQITISQQLGLELSTVSNFFMNARRRSLDKW). The disordered stretch occupies residues 443 to 465 (KWQDEGGSNSGSSSSSSSTCTKA). Positions 448 to 465 (GGSNSGSSSSSSSTCTKA) are enriched in low complexity.

The protein belongs to the CUT homeobox family. As to quaternary structure, binds DNA as a monomer.

It is found in the nucleus. Transcriptional activator. Binds the consensus sequence 5'-DHWATTGAYTWWD-3' on a variety of gene promoters such as those of HNF3B and TTR. Important for liver genes transcription. Stimulates the expression of Onecut3 in the developing endoderm. This chain is Hepatocyte nuclear factor 6 (Onecut1), found in Mus musculus (Mouse).